The chain runs to 218 residues: 7-cyano-7-deazaguanine synthase (218 aa).

Position 9 to 19 (9 to 19 (YSGGMDSFTVL)) interacts with ATP. Residues cysteine 185, cysteine 193, cysteine 196, and cysteine 199 each contribute to the Zn(2+) site.

It belongs to the QueC family. Requires Zn(2+) as cofactor.

The enzyme catalyses 7-carboxy-7-deazaguanine + NH4(+) + ATP = 7-cyano-7-deazaguanine + ADP + phosphate + H2O + H(+). It functions in the pathway purine metabolism; 7-cyano-7-deazaguanine biosynthesis. Catalyzes the ATP-dependent conversion of 7-carboxy-7-deazaguanine (CDG) to 7-cyano-7-deazaguanine (preQ(0)). This chain is 7-cyano-7-deazaguanine synthase, found in Pseudoalteromonas translucida (strain TAC 125).